A 415-amino-acid polypeptide reads, in one-letter code: Adipocyte plasma membrane-associated protein (415 aa).

The tract at residues 1-30 (MNEAEGLRQRRPLRPQVITEDSPAQEAKEG) is disordered. The Cytoplasmic segment spans residues 1-39 (MNEAEGLRQRRPLRPQVITEDSPAQEAKEGSAYSSKVFR). Residues 40 to 60 (VTFLTLAASLAVPLLGATVLL) traverse the membrane as a helical segment. Over 61–412 (DCPIDPQPIS…RSPFICRLNL (352 aa)) the chain is Extracellular. Asn-159 carries N-linked (GlcNAc...) asparagine glycosylation.

It belongs to the strictosidine synthase family.

It localises to the membrane. The chain is Adipocyte plasma membrane-associated protein (APMAP) from Gallus gallus (Chicken).